The chain runs to 405 residues: Double C2-like domain-containing protein alpha (405 aa).

The segment at 1-94 (MRGRRGDRMT…DSYDSDDTTA (94 aa)) is interaction with UNC13D and DYNLT1. Positions 34-54 (DYFPRRGPGPEGGGGGGGTGC) are disordered. A compositionally biased stretch (gly residues) spans 42 to 54 (GPEGGGGGGGTGC). C2 domains are found at residues 94–216 (ALGT…HFNI) and 256–389 (ERGR…ERWH). 9 residues coordinate Ca(2+): Asp125, Asp131, Asp186, Asp188, Asp287, Asp293, Asp347, Asp349, and Asp355. The tract at residues 220-405 (RQVPLPSPSS…PPAAGAYPLA (186 aa)) is interaction with UNC13D.

Interacts (via N-terminus) with UNC13A. Interacts with cytoplasmic dynein light chain DYNLT1. Interacts with UNC13D. Ca(2+) is required as a cofactor. In terms of tissue distribution, brain and mast cells.

It localises to the cytoplasmic vesicle. It is found in the secretory vesicle. The protein localises to the synaptic vesicle membrane. The protein resides in the synapse. Its subcellular location is the synaptosome. It localises to the lysosome. Calcium sensor which most probably regulates fusion of vesicles with membranes. Binds calcium and phospholipids. May be involved in calcium dependent neurotransmitter release through the interaction with UNC13A. May be involved in calcium-dependent spontaneous release of neurotransmitter in absence of action potentials in neuronal cells. Regulates Ca(2+)-dependent secretory lysosome exocytosis in mast cells. This is Double C2-like domain-containing protein alpha (Doc2a) from Mus musculus (Mouse).